The primary structure comprises 77 residues: DNA-directed RNA polymerase subunit epsilon (77 aa).

It belongs to the RNA polymerase subunit epsilon family. As to quaternary structure, RNAP is composed of a core of 2 alpha, a beta and a beta' subunit. The core is associated with a delta subunit, and at least one of epsilon or omega. When a sigma factor is associated with the core the holoenzyme is formed, which can initiate transcription.

The catalysed reaction is RNA(n) + a ribonucleoside 5'-triphosphate = RNA(n+1) + diphosphate. In terms of biological role, a non-essential component of RNA polymerase (RNAP). The polypeptide is DNA-directed RNA polymerase subunit epsilon (Streptococcus pneumoniae (strain P1031)).